The following is a 341-amino-acid chain: Thiamine-phosphate synthase (341 aa).

Positions 1 to 123 (MAVVEEQVVL…AAAAKEWRYR (123 aa)) are unknown. Residues 61-80 (AARDTPHDPGTGLEHPDEGV) form a disordered region. A thiamine-phosphate synthase region spans residues 124–341 (VYTLESTATG…AWFLERLNRG (218 aa)). 4-amino-2-methyl-5-(diphosphooxymethyl)pyrimidine contacts are provided by residues 171–175 (QLREK) and Asn203. Mg(2+) is bound by residues Asp204 and Asp223. Residue Ser242 participates in 4-amino-2-methyl-5-(diphosphooxymethyl)pyrimidine binding. 268–270 (TPT) provides a ligand contact to 2-[(2R,5Z)-2-carboxy-4-methylthiazol-5(2H)-ylidene]ethyl phosphate. A 4-amino-2-methyl-5-(diphosphooxymethyl)pyrimidine-binding site is contributed by Lys271. Gly298 lines the 2-[(2R,5Z)-2-carboxy-4-methylthiazol-5(2H)-ylidene]ethyl phosphate pocket.

This sequence belongs to the thiamine-phosphate synthase family. Mg(2+) is required as a cofactor.

The enzyme catalyses 2-[(2R,5Z)-2-carboxy-4-methylthiazol-5(2H)-ylidene]ethyl phosphate + 4-amino-2-methyl-5-(diphosphooxymethyl)pyrimidine + 2 H(+) = thiamine phosphate + CO2 + diphosphate. It catalyses the reaction 2-(2-carboxy-4-methylthiazol-5-yl)ethyl phosphate + 4-amino-2-methyl-5-(diphosphooxymethyl)pyrimidine + 2 H(+) = thiamine phosphate + CO2 + diphosphate. The catalysed reaction is 4-methyl-5-(2-phosphooxyethyl)-thiazole + 4-amino-2-methyl-5-(diphosphooxymethyl)pyrimidine + H(+) = thiamine phosphate + diphosphate. It participates in cofactor biosynthesis; thiamine diphosphate biosynthesis; thiamine phosphate from 4-amino-2-methyl-5-diphosphomethylpyrimidine and 4-methyl-5-(2-phosphoethyl)-thiazole: step 1/1. Functionally, condenses 4-methyl-5-(beta-hydroxyethyl)thiazole monophosphate (THZ-P) and 2-methyl-4-amino-5-hydroxymethyl pyrimidine pyrophosphate (HMP-PP) to form thiamine monophosphate (TMP). The protein is Thiamine-phosphate synthase of Gloeobacter violaceus (strain ATCC 29082 / PCC 7421).